The sequence spans 641 residues: WW domain-binding protein 11 (641 aa).

Positions 1–11 (MGRRSTSSTKS) are enriched in polar residues. A disordered region spans residues 1–37 (MGRRSTSSTKSGKFMNPTDQARKEARKRELKKNKKQR). A required for nuclear import region spans residues 1-45 (MGRRSTSSTKSGKFMNPTDQARKEARKRELKKNKKQRMMVRAAVL). Lys13 carries the post-translational modification N6-acetyllysine. A compositionally biased stretch (basic residues) spans 28 to 37 (RELKKNKKQR). Residues 75 to 133 (EKVLKDKRKKLRETFERILRLYEKENPDIYKELRKLEVEYEQKRAQLSQYFDAVKNAQH) adopt a coiled-coil conformation. Ser181 carries the phosphoserine modification. The interval 186–213 (LGHGVPRLPPGRKPPGPPPGPPPPQVVQ) is disordered. Arg192 is subject to Omega-N-methylarginine. Positions 192-210 (RLPPGRKPPGPPPGPPPPQ) are enriched in pro residues. The interval 217-221 (RKVGF) is interaction with PP1. At Tyr236 the chain carries Phosphotyrosine. The interval 236–552 (YSPELAQRGH…RPKADDTSAA (317 aa)) is disordered. A Phosphoserine modification is found at Ser237. The segment covering 253 to 263 (SEDDGYPEDMD) has biased composition (acidic residues). Over residues 276 to 304 (TDKSDGESDGDEFVHRDNGERDNNEEKKS) the composition is skewed to basic and acidic residues. 2 positions are modified to phosphoserine: Ser279 and Ser283. The interaction with PP1 stretch occupies residues 306-310 (LSVRF). Over residues 351–365 (EFSEDDDEDDSDDSE) the composition is skewed to acidic residues. Phosphoserine occurs at positions 353, 361, and 364. Residues 366–380 (AEKQSQKQHKEESHS) show a composition bias toward basic and acidic residues. Low complexity predominate over residues 386–404 (ASSQQQAPPQSVPPSQIQA). Pro residues-rich tracts occupy residues 405–447 (PPMP…PPGM), 456–504 (RLLP…PPRP), and 510–530 (PLVP…PLPN). The short motif at 455–466 (PRLLPPGPPPGR) is the PGR element. Residue Lys557 forms a Glycyl lysine isopeptide (Lys-Gly) (interchain with G-Cter in SUMO2) linkage. Lys565 is modified (N6-acetyllysine). Residue Lys572 forms a Glycyl lysine isopeptide (Lys-Gly) (interchain with G-Cter in SUMO2) linkage. The tract at residues 587 to 623 (RENKGATAAPQRKSEDDSAVPLAKAAPKSGPSVPVSV) is disordered. At Ser600 the chain carries Phosphoserine.

Interacts with PPP1CA, PPP1CB and PPP1CC. Interacts via the PGR motif with PQBP1 in the nucleus. Interacts with the WW domains of WBP4. As to expression, ubiquitous. Highly expressed in the heart, pancreas, kidney skeletal muscle, placenta and brain (at protein level). Weakly expressed in liver and lung.

It is found in the nucleus. The protein resides in the cytoplasm. Its function is as follows. Activates pre-mRNA splicing. May inhibit PP1 phosphatase activity. This is WW domain-binding protein 11 from Homo sapiens (Human).